Here is a 158-residue protein sequence, read N- to C-terminus: uncharacterized protein (158 aa).

Residues 33–53 traverse the membrane as a helical segment; the sequence is VLAAVPQLGAAKVLVLLLLGV.

It is found in the membrane. This is an uncharacterized protein from Saccharomyces cerevisiae (strain ATCC 204508 / S288c) (Baker's yeast).